An 89-amino-acid polypeptide reads, in one-letter code: Small ribosomal subunit protein uS19 (89 aa).

This sequence belongs to the universal ribosomal protein uS19 family.

Functionally, protein S19 forms a complex with S13 that binds strongly to the 16S ribosomal RNA. The polypeptide is Small ribosomal subunit protein uS19 (Stenotrophomonas maltophilia (strain K279a)).